Consider the following 483-residue polypeptide: ATP synthase subunit beta (483 aa).

Residue 169-176 participates in ATP binding; it reads GGAGVGKT.

This sequence belongs to the ATPase alpha/beta chains family. F-type ATPases have 2 components, CF(1) - the catalytic core - and CF(0) - the membrane proton channel. CF(1) has five subunits: alpha(3), beta(3), gamma(1), delta(1), epsilon(1). CF(0) has three main subunits: a(1), b(2) and c(9-12). The alpha and beta chains form an alternating ring which encloses part of the gamma chain. CF(1) is attached to CF(0) by a central stalk formed by the gamma and epsilon chains, while a peripheral stalk is formed by the delta and b chains.

The protein localises to the cell membrane. The enzyme catalyses ATP + H2O + 4 H(+)(in) = ADP + phosphate + 5 H(+)(out). In terms of biological role, produces ATP from ADP in the presence of a proton gradient across the membrane. The catalytic sites are hosted primarily by the beta subunits. The protein is ATP synthase subunit beta of Rhodococcus opacus (strain B4).